We begin with the raw amino-acid sequence, 717 residues long: Delta-1-pyrroline-5-carboxylate synthase A (717 aa).

The segment at 1-296 is glutamate 5-kinase; the sequence is MEELDRSRAF…WAPITDSNAR (296 aa). Residues serine 60, aspartate 157, and asparagine 176 each coordinate substrate. Residues 196–197 and 236–242 contribute to the ATP site; these read SD and RGGMTAK. Residues 297–717 are gamma-glutamyl phosphate reductase; sequence DMAVAARESS…YTHQDIPIQA (421 aa).

This sequence in the N-terminal section; belongs to the glutamate 5-kinase family. It in the C-terminal section; belongs to the gamma-glutamyl phosphate reductase family.

The enzyme catalyses L-glutamate + ATP = L-glutamyl 5-phosphate + ADP. The catalysed reaction is L-glutamate 5-semialdehyde + phosphate + NADP(+) = L-glutamyl 5-phosphate + NADPH + H(+). The protein operates within amino-acid biosynthesis; L-proline biosynthesis; L-glutamate 5-semialdehyde from L-glutamate: step 1/2. It participates in amino-acid biosynthesis; L-proline biosynthesis; L-glutamate 5-semialdehyde from L-glutamate: step 2/2. P5CS plays a key role in proline biosynthesis, leading to osmoregulation in plants. The sequence is that of Delta-1-pyrroline-5-carboxylate synthase A (P5CSA) from Arabidopsis thaliana (Mouse-ear cress).